Here is a 596-residue protein sequence, read N- to C-terminus: Capsid protein VP1 (596 aa).

Belongs to the microviridae F protein family.

Its subcellular location is the virion. The protein localises to the host cytoplasm. Assembles to form an icosahedral capsid with a T=1 symmetry. The polypeptide is Capsid protein VP1 (Chlamydia phage 1 (Bacteriophage Chp1)).